The chain runs to 740 residues: NAD(P)H-quinone oxidoreductase subunit 5, chloroplastic (740 aa).

Transmembrane regions (helical) follow at residues 9–29, 40–60, 89–109, 125–145, 147–167, 185–205, 219–239, 258–278, 286–306, 327–347, 354–374, 396–416, 425–445, 543–563, 602–622, and 717–737; these read WIIP…LFLF, WAFQ…YLSI, IDPL…MVLI, FAYM…SNLI, IYIF…FWFT, GDFG…SFEF, NEVD…GAVA, TPIS…FLVA, VIPY…LLGA, LGYM…FHLI, ALLF…VGYS, ITFL…CFWS, WLYS…TAFY, LFPI…GIPF, VLSV…YKPI, and SYLF…YLLF.

This sequence belongs to the complex I subunit 5 family. NDH is composed of at least 16 different subunits, 5 of which are encoded in the nucleus.

The protein localises to the plastid. The protein resides in the chloroplast thylakoid membrane. The catalysed reaction is a plastoquinone + NADH + (n+1) H(+)(in) = a plastoquinol + NAD(+) + n H(+)(out). It catalyses the reaction a plastoquinone + NADPH + (n+1) H(+)(in) = a plastoquinol + NADP(+) + n H(+)(out). NDH shuttles electrons from NAD(P)H:plastoquinone, via FMN and iron-sulfur (Fe-S) centers, to quinones in the photosynthetic chain and possibly in a chloroplast respiratory chain. The immediate electron acceptor for the enzyme in this species is believed to be plastoquinone. Couples the redox reaction to proton translocation, and thus conserves the redox energy in a proton gradient. The sequence is that of NAD(P)H-quinone oxidoreductase subunit 5, chloroplastic (ndhF) from Nicotiana sylvestris (Wood tobacco).